Reading from the N-terminus, the 906-residue chain is UPF0182 protein CA_C0010 (906 aa).

The next 7 membrane-spanning stretches (helical) occupy residues 7–29 (IVTI…DFII), 47–69 (LAAI…WFYY), 96–118 (VAIV…VYWY), 153–175 (LYGV…YIVL), 208–230 (FAII…SFNL), 250–272 (LVFY…TSII), and 279–301 (IFVS…EIVQ). Positions 842 to 862 (NSSNNQSETRTETGGTSTDSS) are enriched in low complexity. A disordered region spans residues 842–875 (NSSNNQSETRTETGGTSTDSSNNKDKLKQAQDLY).

This sequence belongs to the UPF0182 family.

Its subcellular location is the cell membrane. The sequence is that of UPF0182 protein CA_C0010 from Clostridium acetobutylicum (strain ATCC 824 / DSM 792 / JCM 1419 / IAM 19013 / LMG 5710 / NBRC 13948 / NRRL B-527 / VKM B-1787 / 2291 / W).